Reading from the N-terminus, the 183-residue chain is UPF0200 protein MmarC6_1392 (183 aa).

8-15 (GMPGSGKS) provides a ligand contact to ATP.

This sequence belongs to the UPF0200 family.

This Methanococcus maripaludis (strain C6 / ATCC BAA-1332) protein is UPF0200 protein MmarC6_1392.